The sequence spans 359 residues: Phospho-N-acetylmuramoyl-pentapeptide-transferase (359 aa).

The next 10 membrane-spanning stretches (helical) occupy residues 3 to 23 (QILI…PVLI), 55 to 75 (VAIV…GVVI), 84 to 104 (GLLV…DDLI), 117 to 137 (TAKT…ALQF), 156 to 176 (IATV…VVSA), 190 to 210 (LAAG…FWQF), 231 to 251 (LAII…WNAA), 255 to 275 (IFMG…LSVT), 283 to 303 (VVLG…ILAF), and 330 to 350 (VIIR…ALFY).

The protein belongs to the glycosyltransferase 4 family. MraY subfamily. It depends on Mg(2+) as a cofactor.

The protein localises to the cell membrane. The catalysed reaction is UDP-N-acetyl-alpha-D-muramoyl-L-alanyl-gamma-D-glutamyl-meso-2,6-diaminopimeloyl-D-alanyl-D-alanine + di-trans,octa-cis-undecaprenyl phosphate = di-trans,octa-cis-undecaprenyl diphospho-N-acetyl-alpha-D-muramoyl-L-alanyl-D-glutamyl-meso-2,6-diaminopimeloyl-D-alanyl-D-alanine + UMP. The protein operates within cell wall biogenesis; peptidoglycan biosynthesis. Functionally, catalyzes the initial step of the lipid cycle reactions in the biosynthesis of the cell wall peptidoglycan: transfers peptidoglycan precursor phospho-MurNAc-pentapeptide from UDP-MurNAc-pentapeptide onto the lipid carrier undecaprenyl phosphate, yielding undecaprenyl-pyrophosphoryl-MurNAc-pentapeptide, known as lipid I. The protein is Phospho-N-acetylmuramoyl-pentapeptide-transferase of Mycolicibacterium vanbaalenii (strain DSM 7251 / JCM 13017 / BCRC 16820 / KCTC 9966 / NRRL B-24157 / PYR-1) (Mycobacterium vanbaalenii).